A 184-amino-acid chain; its full sequence is Cell wall protein phiA (184 aa).

Positions 1 to 21 are cleaved as a signal peptide; sequence MQLKNLIFAAATAAALPATDA. Residue Asn58 is glycosylated (N-linked (GlcNAc...) asparagine).

The protein belongs to the phiA family.

The protein resides in the secreted. It localises to the cell wall. Its function is as follows. Cell wall protein involved in development of asexual structures such as phialide and conidium development, and thus required for spore formation. Plays a role as a general stress protectant produced by the fungus in competition with antagonistic bacteria. This is Cell wall protein phiA from Aspergillus niger (strain ATCC MYA-4892 / CBS 513.88 / FGSC A1513).